The primary structure comprises 258 residues: Serine/arginine-rich splicing factor x16 (258 aa).

The RRM domain maps to 8–81 (RKVYVGDLGN…RRARVELSTG (74 aa)). Disordered stretches follow at residues 81–113 (GKYARSGGGGGGGGGGGGGGGLGGRDRGGGGRG) and 130–258 (CRER…VSRD). A compositionally biased stretch (gly residues) spans 86–103 (SGGGGGGGGGGGGGGGLG). A compositionally biased stretch (basic and acidic residues) spans 104–113 (GRDRGGGGRG). The CCHC-type zinc-finger motif lies at 116–132 (KCYECGGRGHFARHCRE). 2 stretches are compositionally biased toward basic residues: residues 130–141 (CRERKARQRRRS) and 149–166 (STSRRRRTRSKSGTRSRS). 2 stretches are compositionally biased toward basic and acidic residues: residues 180-197 (NGRDENGSASRYSDHERN) and 210-221 (RRYEDEDDDRVR). 2 stretches are compositionally biased toward low complexity: residues 231 to 240 (RSASPAVRRG) and 249 to 258 (SSASRSVSRD).

Interacts (via Arg/Ser-rich region) with Alsin2/CG7564, Rbp1 and Doa (via N-terminus). Post-translationally, highly phosphorylated. May be phosphorylated by the serine/threonine-protein kinase Doa.

The protein resides in the nucleus. Functionally, serine/arginine-rich splicing factor (SR protein) involved in differential exon usage during RNA transcript processing, probably by binding exonic splicing enhancer elements and recruiting components of the splicing machinery. Binds RNA stem-loop structures with consensus sequence 5'-CCGUNUNKNW-3'. Regulator of genes involved in lipid and carbohydrate metabolism, the immune response and the response to xenobiotics. The polypeptide is Serine/arginine-rich splicing factor x16 (Drosophila melanogaster (Fruit fly)).